The primary structure comprises 343 residues: Tryptophan--tRNA ligase (343 aa).

ATP contacts are provided by residues 15-17 and 24-25; these read QPT and GN. Positions 16 to 25 match the 'HIGH' region motif; the sequence is PTSDSLHLGN. Residue aspartate 145 participates in L-tryptophan binding. Residues 157–159, isoleucine 196, and 205–209 contribute to the ATP site; these read GED and KMSKS. The short motif at 205-209 is the 'KMSKS' region element; the sequence is KMSKS.

Belongs to the class-I aminoacyl-tRNA synthetase family. Homodimer.

It localises to the cytoplasm. The enzyme catalyses tRNA(Trp) + L-tryptophan + ATP = L-tryptophyl-tRNA(Trp) + AMP + diphosphate + H(+). In terms of biological role, catalyzes the attachment of tryptophan to tRNA(Trp). This Mycobacterium leprae (strain TN) protein is Tryptophan--tRNA ligase.